The following is a 430-amino-acid chain: MAAIESVYARQILDSRGNPTVEVVLDTDDGARGLGLVPSGASTGEAEAWERRDGDKSVYQGKGVLGAVKAVNEEIAPKVIGMDATDQRALDDLMIELDGTPNKGRLGANAILGVSLAALYAAAESAELPLYRYIGGTNGHVLPVPNMNIMNGGAHADFATDIQEYMISPYGFQTYSEALQAGVEVYHTLKNVLKKQGLATGLGDEGGFAPKMKTNEDSLKYIMDAISAAGYEPGKQIGIALDVASSEFYNKETGKYHFDGEDRDSEYMLDFYEKLVDQFPIVSIEDPFQEEGWEDWAKITKALGDRLQFVGDDLFVTNPVRLKKGIDMGAGNSLLVKLNQIGTVSETLDAIELATKNGFTSMVSHRSGETPDTTISDLAVAKNTGQIKTGAPARGERIAKYNRLLEIEEELGSTAEYAGYSAFKACRKYM.

Residue glutamine 163 coordinates (2R)-2-phosphoglycerate. The active-site Proton donor is glutamate 205. Aspartate 242, glutamate 285, and aspartate 312 together coordinate Mg(2+). (2R)-2-phosphoglycerate contacts are provided by lysine 337, arginine 366, serine 367, and lysine 388. Residue lysine 337 is the Proton acceptor of the active site.

The protein belongs to the enolase family. Mg(2+) serves as cofactor.

The protein localises to the cytoplasm. The protein resides in the secreted. Its subcellular location is the cell surface. The catalysed reaction is (2R)-2-phosphoglycerate = phosphoenolpyruvate + H2O. It functions in the pathway carbohydrate degradation; glycolysis; pyruvate from D-glyceraldehyde 3-phosphate: step 4/5. Its function is as follows. Catalyzes the reversible conversion of 2-phosphoglycerate (2-PG) into phosphoenolpyruvate (PEP). It is essential for the degradation of carbohydrates via glycolysis. The polypeptide is Enolase (Bifidobacterium animalis subsp. lactis (strain AD011)).